Reading from the N-terminus, the 1845-residue chain is Proteasome adapter and scaffold protein ECM29 (1845 aa).

N-acetylalanine is present on A2. HEAT repeat units follow at residues 28 to 65, 107 to 144, 162 to 205, 326 to 362, 387 to 426, 429 to 466, 469 to 507, 683 to 720, 721 to 759, 783 to 820, 829 to 868, 870 to 907, 931 to 969, 975 to 1012, 1013 to 1050, 1112 to 1149, 1152 to 1189, 1194 to 1231, 1243 to 1281, 1285 to 1323, 1348 to 1386, 1390 to 1427, 1517 to 1554, 1558 to 1595, 1605 to 1642, 1646 to 1683, and 1779 to 1822; these read TDEQ…LVHL, YPRL…LIPT, NLAE…QGSS, RDPV…YDGL, PEIK…VGKL, RMPH…LSMM, AYST…ASTV, YPEK…YSVV, VSTV…LGFT, TLPD…LGEI, PSEG…LGYF, VGDG…ITSA, AGAK…LLSL, THKE…LGLV, YELG…VVFQ, AGEQ…WNAL, DKSM…LNDL, PLDD…LKTL, KGAA…LVKI, AGAM…TEQE, LQYL…IVSL, CPQD…MGHL, SFGG…MASI, TSSL…IACV, KSVP…AADI, TKED…ENEK, and TYSS…LATM. Residues 193 to 207 show a composition bias toward low complexity; sequence QSRQNSSSAQGSSSN. A disordered region spans residues 193–217; that stretch reads QSRQNSSSAQGSSSNSGGGSGIPQP. A Phosphoserine modification is found at S830. T836 is modified (phosphothreonine). A Glycyl lysine isopeptide (Lys-Gly) (interchain with G-Cter in SUMO1) cross-link involves residue K1039.

Belongs to the ECM29 family. In terms of assembly, non-stoichiometric component of the proteasome; associates with the 26S proteasome. Interacts (via N-terminus) with VPS11, VPS26A, VPS36, RAB11FIP4 and RABEP1. Interacts (via C-terminus) with DCTN1, DCTN2, KIF5B, MYH7, MYH10, MYO10 and ARF6.

The protein resides in the endoplasmic reticulum. Its subcellular location is the endoplasmic reticulum-Golgi intermediate compartment. The protein localises to the endosome. It is found in the cytoplasm. It localises to the cytoskeleton. The protein resides in the microtubule organizing center. Its subcellular location is the centrosome. The protein localises to the nucleus. It is found in the multivesicular body. It localises to the cytoplasmic vesicle. Functionally, adapter/scaffolding protein that binds to the 26S proteasome, motor proteins and other compartment specific proteins. May couple the proteasome to different compartments including endosome, endoplasmic reticulum and centrosome. May play a role in ERAD and other enhanced proteolysis. Promotes proteasome dissociation under oxidative stress. The sequence is that of Proteasome adapter and scaffold protein ECM29 from Homo sapiens (Human).